Consider the following 352-residue polypeptide: Farnesyl pyrophosphate synthase (352 aa).

Isopentenyl diphosphate-binding residues include Lys52, Arg55, and Gln93. Positions 100 and 104 each coordinate Mg(2+). Arg109 lines the dimethylallyl diphosphate pocket. Arg110 contacts isopentenyl diphosphate. Dimethylallyl diphosphate contacts are provided by Lys197, Thr198, Gln237, Lys254, and Lys263.

It belongs to the FPP/GGPP synthase family. Mg(2+) is required as a cofactor.

It catalyses the reaction isopentenyl diphosphate + dimethylallyl diphosphate = (2E)-geranyl diphosphate + diphosphate. The enzyme catalyses isopentenyl diphosphate + (2E)-geranyl diphosphate = (2E,6E)-farnesyl diphosphate + diphosphate. Its pathway is isoprenoid biosynthesis; farnesyl diphosphate biosynthesis; farnesyl diphosphate from geranyl diphosphate and isopentenyl diphosphate: step 1/1. The protein operates within isoprenoid biosynthesis; geranyl diphosphate biosynthesis; geranyl diphosphate from dimethylallyl diphosphate and isopentenyl diphosphate: step 1/1. Its function is as follows. Farnesyl pyrophosphate synthase; part of the second module of ergosterol biosynthesis pathway that includes the middle steps of the pathway. ERG20 catalyzes the sequential condensation of isopentenyl pyrophosphate with dimethylallyl pyrophosphate, and then with the resultant geranylpyrophosphate to the ultimate product farnesyl pyrophosphate. The second module is carried out in the vacuole and involves the formation of farnesyl diphosphate, which is also an important intermediate in the biosynthesis of ubiquinone, dolichol, heme and prenylated proteins. Activity by the mevalonate kinase ERG12 first converts mevalonate into 5-phosphomevalonate. 5-phosphomevalonate is then further converted to 5-diphosphomevalonate by the phosphomevalonate kinase ERG8. The diphosphomevalonate decarboxylase MVD1/ERG19 then produces isopentenyl diphosphate. The isopentenyl-diphosphate delta-isomerase IDI1 then catalyzes the 1,3-allylic rearrangement of the homoallylic substrate isopentenyl (IPP) to its highly electrophilic allylic isomer, dimethylallyl diphosphate (DMAPP). Finally the farnesyl diphosphate synthase ERG20 catalyzes the sequential condensation of isopentenyl pyrophosphate with dimethylallyl pyrophosphate, and then with the resultant geranylpyrophosphate to the ultimate product farnesyl pyrophosphate. The sequence is that of Farnesyl pyrophosphate synthase (ERG20) from Saccharomyces cerevisiae (strain ATCC 204508 / S288c) (Baker's yeast).